Reading from the N-terminus, the 523-residue chain is 2-isopropylmalate synthase (523 aa).

The 263-residue stretch at 5 to 267 (VIIFDTTLRD…HTAINHQEIW (263 aa)) folds into the Pyruvate carboxyltransferase domain. The Mn(2+) site is built by aspartate 14, histidine 202, histidine 204, and asparagine 238. A regulatory domain region spans residues 392–523 (RLDYFSVQSG…QHNENNKETV (132 aa)).

This sequence belongs to the alpha-IPM synthase/homocitrate synthase family. LeuA type 1 subfamily. In terms of assembly, homodimer. The cofactor is Mn(2+).

It is found in the cytoplasm. The enzyme catalyses 3-methyl-2-oxobutanoate + acetyl-CoA + H2O = (2S)-2-isopropylmalate + CoA + H(+). It participates in amino-acid biosynthesis; L-leucine biosynthesis; L-leucine from 3-methyl-2-oxobutanoate: step 1/4. In terms of biological role, catalyzes the condensation of the acetyl group of acetyl-CoA with 3-methyl-2-oxobutanoate (2-ketoisovalerate) to form 3-carboxy-3-hydroxy-4-methylpentanoate (2-isopropylmalate). This is 2-isopropylmalate synthase from Escherichia coli O157:H7.